Reading from the N-terminus, the 593-residue chain is NADH-quinone oxidoreductase subunit C/D (593 aa).

Residues 1–184 form an NADH dehydrogenase I subunit C region; the sequence is MTADNALYIP…DPYSLTLAKQ (184 aa). Residues 208–593 are NADH dehydrogenase I subunit D; that stretch reads DYMFLNLGPN…IDFVMADVDR (386 aa).

In the N-terminal section; belongs to the complex I 30 kDa subunit family. The protein in the C-terminal section; belongs to the complex I 49 kDa subunit family. NDH-1 is composed of 13 different subunits. Subunits NuoB, CD, E, F, and G constitute the peripheral sector of the complex.

Its subcellular location is the cell inner membrane. It carries out the reaction a quinone + NADH + 5 H(+)(in) = a quinol + NAD(+) + 4 H(+)(out). Its function is as follows. NDH-1 shuttles electrons from NADH, via FMN and iron-sulfur (Fe-S) centers, to quinones in the respiratory chain. The immediate electron acceptor for the enzyme in this species is believed to be ubiquinone. Couples the redox reaction to proton translocation (for every two electrons transferred, four hydrogen ions are translocated across the cytoplasmic membrane), and thus conserves the redox energy in a proton gradient. This Pseudomonas syringae pv. syringae (strain B728a) protein is NADH-quinone oxidoreductase subunit C/D.